The sequence spans 160 residues: Cytochrome b6-f complex subunit 4 (160 aa).

The next 3 helical transmembrane spans lie at 36–56 (LLYI…GLSV), 95–115 (LLGI…PFIE), and 128–148 (IAMA…IGAA).

It belongs to the cytochrome b family. PetD subfamily. As to quaternary structure, the 4 large subunits of the cytochrome b6-f complex are cytochrome b6, subunit IV (17 kDa polypeptide, PetD), cytochrome f and the Rieske protein, while the 4 small subunits are PetG, PetL, PetM and PetN. The complex functions as a dimer.

It is found in the cellular thylakoid membrane. Functionally, component of the cytochrome b6-f complex, which mediates electron transfer between photosystem II (PSII) and photosystem I (PSI), cyclic electron flow around PSI, and state transitions. This is Cytochrome b6-f complex subunit 4 from Synechococcus sp. (strain CC9311).